A 94-amino-acid polypeptide reads, in one-letter code: Parvalbumin beta 4 (94 aa).

The residue at position 1 (alanine 1) is an N-acetylalanine. EF-hand domains lie at 36 to 63 (FFAI…FSAG) and 67 to 94 (LSDA…EFAA). Residues aspartate 41, aspartate 43, serine 45, phenylalanine 47, glutamate 49, glutamate 52, aspartate 80, aspartate 82, aspartate 84, methionine 86, and glutamate 91 each contribute to the Ca(2+) site.

This sequence belongs to the parvalbumin family.

In terms of biological role, in muscle, parvalbumin is thought to be involved in relaxation after contraction. It binds two calcium ions. The chain is Parvalbumin beta 4 from Merluccius bilinearis (Silver hake).